The chain runs to 154 residues: dCTP deaminase (154 aa).

DCTP is bound by residues 79-84 (RSSLAR), aspartate 95, glutamine 124, and tyrosine 138.

This sequence belongs to the dCTP deaminase family. As to quaternary structure, homotrimer.

The enzyme catalyses dCTP + H2O + H(+) = dUTP + NH4(+). It participates in pyrimidine metabolism; dUMP biosynthesis; dUMP from dCTP (dUTP route): step 1/2. In terms of biological role, catalyzes the deamination of dCTP to dUTP. This chain is dCTP deaminase, found in Pyrococcus abyssi (strain GE5 / Orsay).